The sequence spans 344 residues: Probable Delta(7)-sterol 5(6)-desaturase (344 aa).

The next 3 membrane-spanning stretches (helical) occupy residues 76–96 (LSLF…FASL), 123–143 (QTNA…VAEV), and 160–180 (WYDF…IYWI). The 126-residue stretch at 167–292 (PLFIMFTDFG…FTTLWDRLGG (126 aa)) folds into the Fatty acid hydroxylase domain. A Histidine box-1 motif is present at residues 181 to 185 (HRGLH). The Histidine box-2 motif lies at 194–198 (HKPHH). The chain crosses the membrane as a helical span at residues 224-244 (HIFPFIFPLQKMAYVGLFVFI). Positions 269–273 (HSVHH) match the Histidine box-3 motif.

The protein belongs to the sterol desaturase family. Requires Fe cation as cofactor.

The protein resides in the endoplasmic reticulum membrane. It catalyses the reaction a Delta(7)-sterol + 2 Fe(II)-[cytochrome b5] + O2 + 2 H(+) = a Delta(5),Delta(7)-sterol + 2 Fe(III)-[cytochrome b5] + 2 H2O. It participates in steroid metabolism; ergosterol biosynthesis; ergosterol from zymosterol: step 3/5. In terms of biological role, catalyzes the introduction of a C-5 double bond in the B ring of ergosterol. May contribute to the regulation of ergosterol biosynthesis. This is Probable Delta(7)-sterol 5(6)-desaturase from Neurospora crassa (strain ATCC 24698 / 74-OR23-1A / CBS 708.71 / DSM 1257 / FGSC 987).